Here is a 629-residue protein sequence, read N- to C-terminus: DNA-directed RNA polymerase subunit beta' (629 aa).

Zn(2+) contacts are provided by cysteine 70, cysteine 72, cysteine 85, and cysteine 88. Mg(2+) is bound by residues aspartate 472, aspartate 474, and aspartate 476.

It belongs to the RNA polymerase beta' chain family. RpoC1 subfamily. In terms of assembly, in plastids the minimal PEP RNA polymerase catalytic core is composed of four subunits: alpha, beta, beta', and beta''. When a (nuclear-encoded) sigma factor is associated with the core the holoenzyme is formed, which can initiate transcription. Mg(2+) is required as a cofactor. Zn(2+) serves as cofactor.

It localises to the plastid. Its subcellular location is the chloroplast. The catalysed reaction is RNA(n) + a ribonucleoside 5'-triphosphate = RNA(n+1) + diphosphate. Functionally, DNA-dependent RNA polymerase catalyzes the transcription of DNA into RNA using the four ribonucleoside triphosphates as substrates. In Pyropia yezoensis (Susabi-nori), this protein is DNA-directed RNA polymerase subunit beta'.